Reading from the N-terminus, the 321-residue chain is D-alanine--D-alanine ligase (321 aa).

The ATP-grasp domain occupies 121 to 315 (RSWFLTNNIN…FVNLIEEILK (195 aa)). An ATP-binding site is contributed by 148–199 (IKRPYVIKPFTQGSSIGVEVIFEEDDFNFANYDFPYGDEVIIEKYIKGRELQ). Mg(2+) contacts are provided by E268, E282, and N284.

The protein belongs to the D-alanine--D-alanine ligase family. Mg(2+) serves as cofactor. Requires Mn(2+) as cofactor.

Its subcellular location is the cytoplasm. The enzyme catalyses 2 D-alanine + ATP = D-alanyl-D-alanine + ADP + phosphate + H(+). The protein operates within cell wall biogenesis; peptidoglycan biosynthesis. Its function is as follows. Cell wall formation. The sequence is that of D-alanine--D-alanine ligase from Rickettsia bellii (strain RML369-C).